The following is a 76-amino-acid chain: DNA gyrase inhibitor YacG (76 aa).

The Zn(2+) site is built by Cys-20, Cys-23, Cys-39, and Cys-43. The tract at residues 54–76 is disordered; that stretch reads EEKSIPGAPDLSDSDGWSDDMGY. The segment covering 65–76 has biased composition (acidic residues); that stretch reads SDSDGWSDDMGY.

It belongs to the DNA gyrase inhibitor YacG family. As to quaternary structure, interacts with GyrB. Requires Zn(2+) as cofactor.

Functionally, inhibits all the catalytic activities of DNA gyrase by preventing its interaction with DNA. Acts by binding directly to the C-terminal domain of GyrB, which probably disrupts DNA binding by the gyrase. The protein is DNA gyrase inhibitor YacG of Photobacterium profundum (strain SS9).